The chain runs to 818 residues: Cation/H(+) antiporter 6A (818 aa).

13 helical membrane-spanning segments follow: residues 51 to 71 (NFWEYPLPNLEILIFSTFFIW), 88 to 110 (FTYMMIAGIILGQTCHFSNKSWI), 123 to 143 (VAETLGAFGFVLYWFLKGVTM), 156 to 176 (SVIGFITVIIPLICGSLTFRY), 192 to 212 (LIIFLQSISAFTSIDTLLKDL), 222 to 242 (IALSGAMVTDMLAFGVTFFNA), 248 to 268 (LYGFMQTVGFCLFVVVMICVV), 288 to 308 (FYLYSIFGIAFACFTFFNKVI), 310 to 330 (LFGPAGSFVFGLTVPNGYPLG), 340 to 360 (FNLGSILPLFGSLTMMQVDLL), 376 to 396 (IYEVISFILLVNTTKFVVTTI), 409 to 429 (FALALVLSNKGIFELAYYTYA), and 438 to 458 (EVFTILAAYTLLNSIFIPMLL).

It belongs to the monovalent cation:proton antiporter 2 (CPA2) transporter (TC 2.A.37) family. CHX (TC 2.A.37.4) subfamily. In terms of tissue distribution, preferentially expressed in pollen.

The protein localises to the membrane. Functionally, may operate as a cation/H(+) antiporter. The chain is Cation/H(+) antiporter 6A (CHX6a) from Arabidopsis thaliana (Mouse-ear cress).